The sequence spans 316 residues: Probable cell division protein WhiA (316 aa).

The segment at residues 274 to 308 (SLKELGEMVSTGVISKSGVNHRLRKIDEIAEKLRN) is a DNA-binding region (H-T-H motif).

Belongs to the WhiA family.

Functionally, involved in cell division and chromosome segregation. The chain is Probable cell division protein WhiA from Macrococcus caseolyticus (strain JCSC5402) (Macrococcoides caseolyticum).